The following is a 217-amino-acid chain: GTP-binding protein Rit2 (217 aa).

GTP contacts are provided by residues 27-34 (GAGGVGKS), 74-78 (DTAGQ), and 133-136 (NKID).

This sequence belongs to the small GTPase superfamily. Ras family. Interacts with PLXNB3. Interacts with AFDN, the C-terminal domain of RALGDS and RLF, but not with RIN1 and PIK3CA. RLF binds exclusively to the active GTP-bound form. Binds calmodulin. Interacts with POU4F1 (via N-terminus); the interaction controls POU4F1 transactivation activity on some neuronal target genes. As to expression, expressed in ganglion cell layer (GCL), inner plexiform layer (IPL) and inner nuclear layer (INL) of the retina. Expressed in retinal ganglion cells (RGCs). Expressed in horizontal, bipolar and amacrine cells, but not Mueller glia, of the INL (at protein level). Neuron-specific. Expressed in ganglion cell layer (GCL) and inner plexiform layer (IPL).

It is found in the nucleus. The protein resides in the cell membrane. The catalysed reaction is GTP + H2O = GDP + phosphate + H(+). Alternates between an inactive form bound to GDP and an active form bound to GTP. Functionally, binds and exchanges GTP and GDP. Binds and modulates the activation of POU4F1 as gene expression regulator. The sequence is that of GTP-binding protein Rit2 (Rit2) from Mus musculus (Mouse).